The chain runs to 610 residues: Nuclear factor 7, ovary (610 aa).

The Tudor-knot domain occupies 21–75 (NVGSTYPCKRSDGSQHDADIVKTRYNKQAGREEYYVHYVGLNRRQNEWVDKSRLV). The segment at 79 to 127 (PPKEVETNGTDQEEMTEPTEQPDSKTPQKRKLEEPEPEPKKAKVEDKDA) is disordered. Position 104 is a phosphothreonine; by CDK1 (Thr-104). Residues 108 to 127 (RKLEEPEPEPKKAKVEDKDA) show a composition bias toward basic and acidic residues. The segment at 146 to 186 (CPLCVELFKDPVMVACGHNFCRSCIDKVWEGQSSFACPECK) adopts an RING-type zinc-finger fold. The B box-type zinc-finger motif lies at 220-261 (RPLEKCSEHDERLKLYCKDDGTLGCVICRDSLKHASHNFLPI). 4 residues coordinate Zn(2+): Cys-225, His-228, Cys-247, and His-253. Residues 295–374 (DKIEQHNKNV…AKERMEETDS (80 aa)) adopt a coiled-coil conformation. Positions 415-610 (PIQYIMWKEL…VDALRFVHNQ (196 aa)) constitute a B30.2/SPRY domain.

In terms of assembly, monomer. As to expression, abundant in oocytes. At the neurula stage, low expression in dorsal embryo region including neural folds and somites.

It is found in the nucleus. Its function is as follows. Transcription factor that determines dorsal-ventral body axis. In Xenopus laevis (African clawed frog), this protein is Nuclear factor 7, ovary.